Here is a 1252-residue protein sequence, read N- to C-terminus: Fanconi anemia group J protein homolog (1252 aa).

Residues 11 to 452 (GGVKIMFPCK…KDHEQLRAMC (442 aa)) enclose the Helicase ATP-binding domain. Residues 164 to 181 (RKRIRPLETEQQVRKRHC) carry the Nuclear localization signal motif. An ATP-binding site is contributed by 191-198 (ALEVYNQR). Cys292, Cys308, Cys320, and Cys360 together coordinate [4Fe-4S] cluster. The DEAH box motif lies at 403-406 (DEAH). Disordered regions lie at residues 919-1008 (SKEP…DRTN) and 1212-1252 (TNGE…STST). 2 stretches are compositionally biased toward polar residues: residues 920–930 (KEPSSASQQEA) and 952–969 (HLTT…NQPG). Residues 989–1008 (MDSTPRRPANKTEKKSDRTN) are compositionally biased toward basic and acidic residues. Over residues 1215 to 1224 (EEAEQVESQE) the composition is skewed to acidic residues. A compositionally biased stretch (basic residues) spans 1228 to 1239 (KKRKISLSRSRN).

It belongs to the DEAD box helicase family. DEAH subfamily. It depends on [4Fe-4S] cluster as a cofactor.

The protein localises to the nucleus. The enzyme catalyses Couples ATP hydrolysis with the unwinding of duplex DNA at the replication fork by translocating in the 5'-3' direction. This creates two antiparallel DNA single strands (ssDNA). The leading ssDNA polymer is the template for DNA polymerase III holoenzyme which synthesizes a continuous strand.. It carries out the reaction ATP + H2O = ADP + phosphate + H(+). DNA-dependent helicase and 5' to 3' DNA helicase required for the maintenance of chromosomal stability. Involved in the repair of DNA double-strand breaks by homologous recombination. Involved in the repair of abasic sites at replication forks by promoting the degradation of DNA-protein cross-links: acts by catalyzing unfolding of HMCES DNA-protein cross-link via its helicase activity, exposing the underlying DNA and enabling cleavage of the DNA-protein adduct by the SPRTN metalloprotease. This chain is Fanconi anemia group J protein homolog (BRIP1), found in Gallus gallus (Chicken).